Here is a 227-residue protein sequence, read N- to C-terminus: Isopentenyl-diphosphate Delta-isomerase 1 (227 aa).

Substrate is bound at residue lysine 36. Mg(2+) is bound by residues histidine 40 and histidine 51. In terms of domain architecture, Nudix hydrolase spans leucine 49–isoleucine 199. Arginine 70 and lysine 74 together coordinate substrate. Residue cysteine 86 is part of the active site. Serine 87 contacts substrate. Mg(2+) contacts are provided by glutamate 146 and glutamate 148. Glutamate 148 is an active-site residue. Residue lysine 176 is modified to N6-acetyllysine. The Microbody targeting signal signature appears at histidine 225–leucine 227.

Belongs to the IPP isomerase type 1 family. Monomer. Requires Mg(2+) as cofactor.

It is found in the peroxisome. The catalysed reaction is isopentenyl diphosphate = dimethylallyl diphosphate. The protein operates within isoprenoid biosynthesis; dimethylallyl diphosphate biosynthesis; dimethylallyl diphosphate from isopentenyl diphosphate: step 1/1. Functionally, catalyzes the 1,3-allylic rearrangement of the homoallylic substrate isopentenyl (IPP) to its highly electrophilic allylic isomer, dimethylallyl diphosphate (DMAPP). The sequence is that of Isopentenyl-diphosphate Delta-isomerase 1 (Idi1) from Mus musculus (Mouse).